The sequence spans 452 residues: Sulfide:quinone oxidoreductase, mitochondrial (452 aa).

Residues 54 to 55 (AG), Glu-77, Gln-85, and Val-120 contribute to the FAD site. The Cysteine persulfide intermediate role is filled by Cys-204. A disulfide bridge connects residues Cys-204 and Cys-380. Residues Asp-337 and 345–348 (KTAA) contribute to the FAD site. Residue Cys-380 is the Cysteine persulfide intermediate of the active site.

It belongs to the SQRD family. Requires FAD as cofactor.

It is found in the mitochondrion. The catalysed reaction is ubiquinone-10 + hydrogen sulfide + sulfite + 2 H(+) = ubiquinol-10 + thiosulfate. It carries out the reaction a quinone + hydrogen sulfide + glutathione + H(+) = S-sulfanylglutathione + a quinol. Catalyzes the oxidation of hydrogen sulfide, with the help of a quinone. This is Sulfide:quinone oxidoreductase, mitochondrial from Dictyostelium discoideum (Social amoeba).